The chain runs to 135 residues: Large ribosomal subunit protein eL32 (135 aa).

The protein belongs to the eukaryotic ribosomal protein eL32 family.

The sequence is that of Large ribosomal subunit protein eL32 from Methanococcus maripaludis (strain C5 / ATCC BAA-1333).